The chain runs to 378 residues: Plant intracellular Ras-group-related LRR protein 8 (378 aa).

The 77-residue stretch at 10-86 (PTITVQVKFG…VMLMASQGLH (77 aa)) folds into the Ubiquitin-like domain. A disordered region spans residues 85–120 (LHQGDGPITKNSSVPAPSTRRASNVKEAQIQKSDTN). A compositionally biased stretch (polar residues) spans 93 to 106 (TKNSSVPAPSTRRA). LRR repeat units follow at residues 129–152 (WKAT…VWGC), 153–176 (GSSI…IAAL), 178–201 (SLQK…GLTC), 202–225 (VQTL…LGSI), 226–250 (THLR…LLKH), 252–271 (EILI…IGGC), 272–293 (ESLN…AFGN), 294–317 (LQHL…FFIK), and 319–344 (SQLI…GWEE).

The protein belongs to the SHOC2 family. As to expression, widely expressed except in panicles.

Functionally, leucine-rich repeat protein that likely mediates protein interactions, possibly in the context of signal transduction. In Oryza sativa subsp. japonica (Rice), this protein is Plant intracellular Ras-group-related LRR protein 8 (IRL8).